Here is a 1335-residue protein sequence, read N- to C-terminus: Membrane-associated phosphatidylinositol transfer protein 2 (1335 aa).

Disordered regions lie at residues 32–51 (ETHG…YTDG) and 262–341 (EEGP…SEEE). Residues 275 to 286 (KDQASGTTSDPG) are compositionally biased toward polar residues. Residues 299 to 319 (KQWSTSSKSSRSSKRGASPSR) are compositionally biased toward low complexity. Residues serine 334, serine 338, serine 365, and serine 586 each carry the phosphoserine modification. Positions 606–657 (HCSGGSGGGGSGGSSLESSRHLSRSNIDIPRSNGTEDSRRQLPRKRSDSSTY) are disordered. The span at 609–618 (GGSGGGGSGG) shows a compositional bias: gly residues. Residue serine 630 is modified to Phosphoserine. Positions 639 to 653 (GTEDSRRQLPRKRSD) are enriched in basic and acidic residues. 3 positions are modified to phosphoserine: serine 686, serine 687, and serine 688. The 249-residue stretch at 701-949 (FDFEIADLFL…VSFLLRQVMR (249 aa)) folds into the DDHD domain. Arginine 814 is modified (omega-N-methylarginine). The tract at residues 861–880 (ALPPPSPTTQGPRARARQVS) is disordered. The residue at position 1263 (serine 1263) is a Phosphoserine. Residues 1282-1313 (TISAQPSGPSHRHDRTQTQMDSEQRGQRSMSV) are disordered. Over residues 1298–1313 (QTQMDSEQRGQRSMSV) the composition is skewed to polar residues.

Belongs to the PtdIns transfer protein family. PI transfer class IIA subfamily. In terms of assembly, interacts with CPNE4 (via VWFA domain). Interacts with PTK2B via its C-terminus. Detected in retina and in the dentate gyrus of the cerebellum.

It is found in the endomembrane system. The protein resides in the cytoplasm. The protein localises to the cytoskeleton. Catalyzes the transfer of phosphatidylinositol and phosphatidylcholine between membranes (in vitro). Binds calcium ions. The polypeptide is Membrane-associated phosphatidylinositol transfer protein 2 (Pitpnm2) (Mus musculus (Mouse)).